The primary structure comprises 607 residues: UvrABC system protein C (607 aa).

The GIY-YIG domain maps to 16–94; the sequence is GRPGVYRMFD…IKEWRPPYNI (79 aa). One can recognise a UVR domain in the interval 203-238; sequence QQLGNELNAEMEKAAMALDFEKAAELRDQIALLRRV.

This sequence belongs to the UvrC family. As to quaternary structure, interacts with UvrB in an incision complex.

The protein localises to the cytoplasm. Functionally, the UvrABC repair system catalyzes the recognition and processing of DNA lesions. UvrC both incises the 5' and 3' sides of the lesion. The N-terminal half is responsible for the 3' incision and the C-terminal half is responsible for the 5' incision. This is UvrABC system protein C from Pseudomonas putida (strain ATCC 700007 / DSM 6899 / JCM 31910 / BCRC 17059 / LMG 24140 / F1).